The primary structure comprises 363 residues: 3-dehydroquinate synthase (363 aa).

Residues 109–113 (GASTD), 133–134 (TT), Lys-146, and Lys-155 each bind NAD(+). Zn(2+) contacts are provided by Glu-188, His-251, and His-267.

Belongs to the sugar phosphate cyclases superfamily. Dehydroquinate synthase family. It depends on NAD(+) as a cofactor. Co(2+) serves as cofactor. Zn(2+) is required as a cofactor.

The protein resides in the cytoplasm. It carries out the reaction 7-phospho-2-dehydro-3-deoxy-D-arabino-heptonate = 3-dehydroquinate + phosphate. Its pathway is metabolic intermediate biosynthesis; chorismate biosynthesis; chorismate from D-erythrose 4-phosphate and phosphoenolpyruvate: step 2/7. Its function is as follows. Catalyzes the conversion of 3-deoxy-D-arabino-heptulosonate 7-phosphate (DAHP) to dehydroquinate (DHQ). The polypeptide is 3-dehydroquinate synthase (Streptomyces coelicolor (strain ATCC BAA-471 / A3(2) / M145)).